A 144-amino-acid chain; its full sequence is Large ribosomal subunit protein uL15 (144 aa).

A compositionally biased stretch (basic and acidic residues) spans 1 to 14 (MKLHELKPNEGARD). The tract at residues 1–43 (MKLHELKPNEGARDVRKRVGRGTSSGTGKTAGRGQKGQKARSK) is disordered. The segment covering 23-35 (TSSGTGKTAGRGQ) has biased composition (gly residues).

Belongs to the universal ribosomal protein uL15 family. As to quaternary structure, part of the 50S ribosomal subunit.

Binds to the 23S rRNA. This is Large ribosomal subunit protein uL15 from Latilactobacillus sakei subsp. sakei (strain 23K) (Lactobacillus sakei subsp. sakei).